Consider the following 328-residue polypeptide: Methionyl-tRNA formyltransferase (328 aa).

121–124 (SLLP) contributes to the (6S)-5,6,7,8-tetrahydrofolate binding site.

This sequence belongs to the Fmt family.

It carries out the reaction L-methionyl-tRNA(fMet) + (6R)-10-formyltetrahydrofolate = N-formyl-L-methionyl-tRNA(fMet) + (6S)-5,6,7,8-tetrahydrofolate + H(+). Its function is as follows. Attaches a formyl group to the free amino group of methionyl-tRNA(fMet). The formyl group appears to play a dual role in the initiator identity of N-formylmethionyl-tRNA by promoting its recognition by IF2 and preventing the misappropriation of this tRNA by the elongation apparatus. This is Methionyl-tRNA formyltransferase from Paraburkholderia phytofirmans (strain DSM 17436 / LMG 22146 / PsJN) (Burkholderia phytofirmans).